Consider the following 106-residue polypeptide: Small ribosomal subunit protein uS10 (106 aa).

The protein belongs to the universal ribosomal protein uS10 family. Part of the 30S ribosomal subunit.

Involved in the binding of tRNA to the ribosomes. The chain is Small ribosomal subunit protein uS10 from Mycoplasma genitalium (strain ATCC 33530 / DSM 19775 / NCTC 10195 / G37) (Mycoplasmoides genitalium).